The sequence spans 197 residues: Small ribosomal subunit protein uS10c (197 aa).

The transit peptide at 1–60 (MATSSLSTIVFSPLALSNSSSFPNKPQVSNLSLHSSLSNLRRTLSHSSPSSSSSSNVRVF) directs the protein to the chloroplast. The interval 67 to 91 (ESQETGPESYVEEGSETSALGIGAD) is disordered.

This sequence belongs to the universal ribosomal protein uS10 family. In terms of assembly, part of the 30S ribosomal subunit.

Its subcellular location is the plastid. The protein localises to the chloroplast. The protein is Small ribosomal subunit protein uS10c (RPS10) of Mesembryanthemum crystallinum (Common ice plant).